The sequence spans 1092 residues: Leukemia inhibitory factor receptor (1092 aa).

The first 43 residues, 1–43 (MAAYSWWRQPSWMVDNKRSRMTPNLPWLLSALTLLHLTMHANG), serve as a signal peptide directing secretion. At 44–828 (LKRGVQDLKC…SMFVVTKENS (785 aa)) the chain is on the extracellular side. The region spanning 45–126 (KRGVQDLKCT…QSKFTLNEKD (82 aa)) is the Fibronectin type-III 1 domain. Disulfide bonds link cysteine 53-cysteine 63 and cysteine 80-cysteine 88. Residues asparagine 164, asparagine 199, asparagine 238, and asparagine 261 are each glycosylated (N-linked (GlcNAc...) asparagine). 2 disulfides stabilise this stretch: cysteine 208–cysteine 265 and cysteine 336–cysteine 346. 5 Fibronectin type-III domains span residues 330 to 429 (VPQK…VAPH), 430 to 529 (DPTS…TEAT), 533 to 624 (GPDT…IPND), 622 to 714 (PNDD…IGYV), and 719 to 828 (PIVA…KENS). N-linked (GlcNAc...) asparagine glycans are attached at residues asparagine 385, asparagine 402, asparagine 421, asparagine 440, asparagine 453, and asparagine 476. Cysteine 461 and cysteine 506 are oxidised to a cystine. Residues 514–518 (WSRWS) carry the WSXWS motif motif. 6 N-linked (GlcNAc...) asparagine glycosylation sites follow: asparagine 567, asparagine 647, asparagine 658, asparagine 675, asparagine 724, and asparagine 782. Residues 829-853 (VGLIIAILIPVAVAVIVGVVTSILC) traverse the membrane as a helical segment. The Cytoplasmic portion of the chain corresponds to 854–1092 (YRKREWIKET…TNFFQNKPND (239 aa)). The Box 1 motif motif lies at 864–872 (FYPDIPNPE). Phosphoserine occurs at positions 922 and 1039. Residues 1009–1092 (EDTAAEDEEG…TNFFQNKPND (84 aa)) form a disordered region. Composition is skewed to polar residues over residues 1027–1062 (ANVN…NSRQ) and 1081–1092 (SFTNFFQNKPND).

It belongs to the type I cytokine receptor family. Type 2 subfamily. Heterodimer composed of LIFR and IL6ST. The heterodimer formed by LIFR and IL6ST interacts with the complex formed by CNTF and CNTFR. As to expression, placenta, liver, kidney, heart, lung, brain, and embryos. The liver may be the primary site of synthesis of the secreted form.

The protein localises to the cell membrane. It is found in the secreted. Its function is as follows. Signal-transducing molecule. May have a common pathway with IL6ST. The soluble form inhibits the biological activity of LIF by blocking its binding to receptors on target cells. In Mus musculus (Mouse), this protein is Leukemia inhibitory factor receptor (Lifr).